We begin with the raw amino-acid sequence, 205 residues long: HTH-type transcriptional regulator PksA (205 aa).

Residues 8 to 68 form the HTH tetR-type domain; that stretch reads EKRRKQIAEA…FAMKLVQEKV (61 aa). Residues 31-50 constitute a DNA-binding region (H-T-H motif); that stretch reads SARNIAKEAGLSLGALRHYF.

In terms of biological role, transcriptional regulation of the polyketide synthase operon. In Bacillus subtilis (strain 168), this protein is HTH-type transcriptional regulator PksA (pksA).